The following is a 421-amino-acid chain: Gamma-glutamyl phosphate reductase (421 aa).

Belongs to the gamma-glutamyl phosphate reductase family.

Its subcellular location is the cytoplasm. The enzyme catalyses L-glutamate 5-semialdehyde + phosphate + NADP(+) = L-glutamyl 5-phosphate + NADPH + H(+). It participates in amino-acid biosynthesis; L-proline biosynthesis; L-glutamate 5-semialdehyde from L-glutamate: step 2/2. Functionally, catalyzes the NADPH-dependent reduction of L-glutamate 5-phosphate into L-glutamate 5-semialdehyde and phosphate. The product spontaneously undergoes cyclization to form 1-pyrroline-5-carboxylate. The sequence is that of Gamma-glutamyl phosphate reductase from Acinetobacter baumannii (strain ATCC 17978 / DSM 105126 / CIP 53.77 / LMG 1025 / NCDC KC755 / 5377).